The primary structure comprises 684 residues: Sec1 family domain-containing protein 2 (684 aa).

The protein belongs to the STXBP/unc-18/SEC1 family.

Its function is as follows. May be involved in protein transport. This chain is Sec1 family domain-containing protein 2 (Scfd2), found in Mus musculus (Mouse).